We begin with the raw amino-acid sequence, 208 residues long: MDYLTIALAKGRIEGESFKKFKKMGLGDSIDTDTRKLIFKDEENKIIYIHVKPSDVVTYVEKGVADLGIAGKDTILENETDVYEIYDLGFGKCKFAVAGLKGDSIYREDEYLKVATKYPNIAKKYFKEKGQKIEIIKLNGSVELAPIVGLSDVIVDIVETGNTLKANGLEILEDICNISARIISNRASYRFKYEQIQNIIRLFEELDN.

It belongs to the ATP phosphoribosyltransferase family. Short subfamily. In terms of assembly, heteromultimer composed of HisG and HisZ subunits.

The protein resides in the cytoplasm. The enzyme catalyses 1-(5-phospho-beta-D-ribosyl)-ATP + diphosphate = 5-phospho-alpha-D-ribose 1-diphosphate + ATP. Its pathway is amino-acid biosynthesis; L-histidine biosynthesis; L-histidine from 5-phospho-alpha-D-ribose 1-diphosphate: step 1/9. Functionally, catalyzes the condensation of ATP and 5-phosphoribose 1-diphosphate to form N'-(5'-phosphoribosyl)-ATP (PR-ATP). Has a crucial role in the pathway because the rate of histidine biosynthesis seems to be controlled primarily by regulation of HisG enzymatic activity. This Clostridioides difficile (strain 630) (Peptoclostridium difficile) protein is ATP phosphoribosyltransferase.